A 477-amino-acid polypeptide reads, in one-letter code: Methylenetetrahydrofolate--tRNA-(uracil-5-)-methyltransferase TrmFO (477 aa).

Residue 15-20 coordinates FAD; it reads GAGLAG.

This sequence belongs to the MnmG family. TrmFO subfamily. The cofactor is FAD.

It is found in the cytoplasm. The catalysed reaction is uridine(54) in tRNA + (6R)-5,10-methylene-5,6,7,8-tetrahydrofolate + NADH + H(+) = 5-methyluridine(54) in tRNA + (6S)-5,6,7,8-tetrahydrofolate + NAD(+). It carries out the reaction uridine(54) in tRNA + (6R)-5,10-methylene-5,6,7,8-tetrahydrofolate + NADPH + H(+) = 5-methyluridine(54) in tRNA + (6S)-5,6,7,8-tetrahydrofolate + NADP(+). Catalyzes the folate-dependent formation of 5-methyl-uridine at position 54 (M-5-U54) in all tRNAs. The polypeptide is Methylenetetrahydrofolate--tRNA-(uracil-5-)-methyltransferase TrmFO (Rhodopseudomonas palustris (strain BisB5)).